The following is a 363-amino-acid chain: Phospho-N-acetylmuramoyl-pentapeptide-transferase (363 aa).

The next 9 membrane-spanning stretches (helical) occupy residues 13–33 (ISGI…AFFL), 49–69 (LPLL…IPLL), 95–115 (MGGI…SNFA), 119–139 (LAVS…DWQI), 154–174 (LALQ…NQPS), 183–203 (WVSF…FVLV), 224–244 (AIAL…LMVF), 281–301 (AVAL…IFFV), and 343–363 (ELQV…ICLA).

The protein belongs to the glycosyltransferase 4 family. MraY subfamily. It depends on Mg(2+) as a cofactor.

The protein localises to the cell inner membrane. The catalysed reaction is UDP-N-acetyl-alpha-D-muramoyl-L-alanyl-gamma-D-glutamyl-meso-2,6-diaminopimeloyl-D-alanyl-D-alanine + di-trans,octa-cis-undecaprenyl phosphate = di-trans,octa-cis-undecaprenyl diphospho-N-acetyl-alpha-D-muramoyl-L-alanyl-D-glutamyl-meso-2,6-diaminopimeloyl-D-alanyl-D-alanine + UMP. It functions in the pathway cell wall biogenesis; peptidoglycan biosynthesis. Catalyzes the initial step of the lipid cycle reactions in the biosynthesis of the cell wall peptidoglycan: transfers peptidoglycan precursor phospho-MurNAc-pentapeptide from UDP-MurNAc-pentapeptide onto the lipid carrier undecaprenyl phosphate, yielding undecaprenyl-pyrophosphoryl-MurNAc-pentapeptide, known as lipid I. This chain is Phospho-N-acetylmuramoyl-pentapeptide-transferase, found in Nostoc punctiforme (strain ATCC 29133 / PCC 73102).